The sequence spans 456 residues: MAMRKGKEYELNIEEIEFPSMGIAYHEGLKVYVKHGIPGQKVLARITTKKKDHAKGKIIEVLEDLPYKIEAKCPAFGQCGGCAHQDIPYEKQLEIKQHEILELFKKANLDGFDFLPIEGSPKQYEYRNKMEFTFGDLKKGGELNLGMHAKGMSFGIISADECKIVDEDYRNILNATLNYFREKQLPHYRIMAREGYLRNLVIRKAENTGEVLVNLVTTSQIDFNLDEYTEIIKSINYKGNLVGILHTINDSLSDVVQCDKLNILYGRDYIIEDLLGLKFKITPLSFFQTNSKGAEKLYSIVRDFIGESKSKTVFDLYCGTGTIGQIVAPEAKKVIGIELIEEAVESARENAKLNNLNNCEFIAGDIAQVIKEVKQKPDVIILDPPRPGVHPKALEYVIKFDSPTIVYVSCNPKTLVEDLKVLVENGYVIEKVKGMDMFPSTPHVETVVGLRRKDTL.

The TRAM domain occupies Ala-2–Glu-60. Residues Cys-73, Cys-79, Cys-82, and Cys-162 each contribute to the [4Fe-4S] cluster site. 4 residues coordinate S-adenosyl-L-methionine: Gln-288, Tyr-317, Glu-338, and Asp-383. The active-site Nucleophile is the Cys-410.

It belongs to the class I-like SAM-binding methyltransferase superfamily. RNA M5U methyltransferase family.

This is an uncharacterized protein from Clostridium tetani (strain Massachusetts / E88).